The following is a 115-amino-acid chain: MNEMIRFPLQLTDSAINRIKTLIAEEANPHLKFRVYITGGGCSGLQYGFTFDDKVNEEDIAIEKQGVVLIVDPISLQYLLGGLVDYSEGLKGSRFFIINPNVQTTCSCGSSFSMT.

Residues cysteine 42, cysteine 106, and cysteine 108 each contribute to the iron-sulfur cluster site.

Belongs to the HesB/IscA family. Homodimer. Iron-sulfur cluster serves as cofactor.

Its function is as follows. Required for insertion of 4Fe-4S clusters for at least IspG. The chain is Iron-sulfur cluster insertion protein ErpA from Baumannia cicadellinicola subsp. Homalodisca coagulata.